The primary structure comprises 295 residues: MTHLFEGVGVALTTPFTNNKINIEALKTHVNFLLENNAQAIIVNGTTAESPTLTTDEKERILKTVIDLVDKRVPVIAGTGTNDTEKSIQASIQAKALGADAIMLITPYYNKTNQRGLVKHFEAIADAVKLPVVLYNVPSRTNMTIEPETVEILSQHPYIVALKDATNDFEYLEEVKKRIDTNSFALYSGNDDNVVEYYQRGGQGVISVIANVIPKEFQALYDAQQSGLDIQDQFKPIGTLLSALSVDINPIPIKALTSYLGFGNYELRLPLVSLEDTDTKVLREAYDTFKAGENE.

Position 47 (Thr-47) interacts with pyruvate. Tyr-135 acts as the Proton donor/acceptor in catalysis. Lys-163 (schiff-base intermediate with substrate) is an active-site residue. Ile-206 contributes to the pyruvate binding site.

Belongs to the DapA family. Homodimer.

Its subcellular location is the cytoplasm. The catalysed reaction is L-aspartate 4-semialdehyde + pyruvate = (2S,4S)-4-hydroxy-2,3,4,5-tetrahydrodipicolinate + H2O + H(+). It participates in amino-acid biosynthesis; L-lysine biosynthesis via DAP pathway; (S)-tetrahydrodipicolinate from L-aspartate: step 3/4. In terms of biological role, catalyzes the condensation of (S)-aspartate-beta-semialdehyde [(S)-ASA] and pyruvate to 4-hydroxy-tetrahydrodipicolinate (HTPA). The sequence is that of 4-hydroxy-tetrahydrodipicolinate synthase from Staphylococcus aureus (strain MSSA476).